The primary structure comprises 132 residues: mRNA interferase toxin YafO (132 aa).

Probably forms a complex with the antitoxin YafN which inhibits the mRNA interferase activity.

Toxic component of a type II toxin-antitoxin (TA) system. A translation-dependent mRNA interferase. Overexpression causes cessation of cell growth and inhibits cell proliferation via inhibition of translation; this blockage is overcome by subsequent expression of antitoxin YafN. Overexpression causes cleavage of a number of mRNAs in a ribosome-dependent fashion. YafO binding to the 50S ribosomal subunit in the translation complex induces mRNA cleavage 3' to the region protected by the ribosome; YafO alone is not able to digest mRNA. The chain is mRNA interferase toxin YafO (yafO) from Escherichia coli (strain K12).